Here is a 148-residue protein sequence, read N- to C-terminus: Transcriptional regulator MraZ (148 aa).

2 consecutive SpoVT-AbrB domains span residues 5 to 51 and 80 to 123; these read STQL…PQPV and ASDV…DMAK.

It belongs to the MraZ family. Forms oligomers.

The protein localises to the cytoplasm. It localises to the nucleoid. The sequence is that of Transcriptional regulator MraZ from Nitrosomonas europaea (strain ATCC 19718 / CIP 103999 / KCTC 2705 / NBRC 14298).